The following is a 110-amino-acid chain: tRNA-binding protein YgjH (110 aa).

The 103-residue stretch at 8 to 110 (DFARLEMRVG…RMMPAGVRVV (103 aa)) folds into the tRNA-binding domain.

Homodimer.

This Escherichia coli (strain K12) protein is tRNA-binding protein YgjH (ygjH).